Consider the following 199-residue polypeptide: MSEISAQLVKELREITGAGMMDCKKALRESNGDKVMAIETLRKKGLASADRKANKVATEGVIVSYIHTGYKIGVLVEVNCETDFVARRNEFKDFAKDIAMQIAASPSVEYITFNDIPAEIIEKEKKIESMREDLKNKPEDIKQKIIEGRIRKNLELLVLYDQAYMRDQSINIETLVKLKISYFNENIKIRRFTKYILGN.

This sequence belongs to the EF-Ts family.

Its subcellular location is the plastid. The protein localises to the chloroplast. Its function is as follows. Associates with the EF-Tu.GDP complex and induces the exchange of GDP to GTP. It remains bound to the aminoacyl-tRNA.EF-Tu.GTP complex up to the GTP hydrolysis stage on the ribosome. This chain is Elongation factor Ts, chloroplastic (tsf), found in Galdieria sulphuraria (Red alga).